We begin with the raw amino-acid sequence, 295 residues long: 4-diphosphocytidyl-2-C-methyl-D-erythritol kinase (295 aa).

Lys-10 is a catalytic residue. 97–107 lines the ATP pocket; the sequence is PIGSGLGGASS. Residue Asp-139 is part of the active site.

Belongs to the GHMP kinase family. IspE subfamily. As to quaternary structure, homodimer.

The catalysed reaction is 4-CDP-2-C-methyl-D-erythritol + ATP = 4-CDP-2-C-methyl-D-erythritol 2-phosphate + ADP + H(+). It participates in isoprenoid biosynthesis; isopentenyl diphosphate biosynthesis via DXP pathway; isopentenyl diphosphate from 1-deoxy-D-xylulose 5-phosphate: step 3/6. In terms of biological role, catalyzes the phosphorylation of the position 2 hydroxy group of 4-diphosphocytidyl-2C-methyl-D-erythritol. In Blochmanniella pennsylvanica (strain BPEN), this protein is 4-diphosphocytidyl-2-C-methyl-D-erythritol kinase.